Reading from the N-terminus, the 298-residue chain is UDP-3-O-acyl-N-acetylglucosamine deacetylase (298 aa).

Zn(2+) contacts are provided by His-75, His-232, and Asp-236. His-259 functions as the Proton donor in the catalytic mechanism.

Belongs to the LpxC family. The cofactor is Zn(2+).

It carries out the reaction a UDP-3-O-[(3R)-3-hydroxyacyl]-N-acetyl-alpha-D-glucosamine + H2O = a UDP-3-O-[(3R)-3-hydroxyacyl]-alpha-D-glucosamine + acetate. It functions in the pathway glycolipid biosynthesis; lipid IV(A) biosynthesis; lipid IV(A) from (3R)-3-hydroxytetradecanoyl-[acyl-carrier-protein] and UDP-N-acetyl-alpha-D-glucosamine: step 2/6. Functionally, catalyzes the hydrolysis of UDP-3-O-myristoyl-N-acetylglucosamine to form UDP-3-O-myristoylglucosamine and acetate, the committed step in lipid A biosynthesis. This Nitratiruptor sp. (strain SB155-2) protein is UDP-3-O-acyl-N-acetylglucosamine deacetylase.